Consider the following 215-residue polypeptide: Cytochrome b6 (215 aa).

The helical transmembrane segment at 32–52 threads the bilayer; that stretch reads IFYCIGGITFTCFLVQVATGF. Heme c is bound at residue cysteine 35. Heme b is bound by residues glycine 37, arginine 83, histidine 86, histidine 100, arginine 103, and arginine 114. A helical membrane pass occupies residues 90 to 110; the sequence is ASMMVLMMVLHVFRVYLTGGF. Helical transmembrane passes span 116–136 and 186–206; these read LTWV…VTGY and LHTF…FLMI. Heme b-binding residues include histidine 187 and histidine 202. The heme c site is built by arginine 207 and isoleucine 211. A heme b-binding site is contributed by serine 212.

This sequence belongs to the cytochrome b family. PetB subfamily. As to quaternary structure, the 4 large subunits of the cytochrome b6-f complex are cytochrome b6, subunit IV (17 kDa polypeptide, PetD), cytochrome f and the Rieske protein, while the 4 small subunits are PetG, PetL, PetM and PetN. The complex functions as a dimer. It depends on heme b as a cofactor. Heme c is required as a cofactor. Post-translationally, the N-terminus is blocked.

The protein localises to the plastid. Its subcellular location is the chloroplast thylakoid membrane. In terms of biological role, component of the cytochrome b6-f complex, which mediates electron transfer between photosystem II (PSII) and photosystem I (PSI), cyclic electron flow around PSI, and state transitions. The protein is Cytochrome b6 of Chlamydomonas reinhardtii (Chlamydomonas smithii).